The sequence spans 192 residues: Glycerol-3-phosphate acyltransferase (192 aa).

Transmembrane regions (helical) follow at residues 4-24 (MFWLLATFAYLLGSLSFAILL), 54-74 (LAVLTLLGDLCKGLIPVVLAG), 80-100 (PSQQGWIGVCAVLGHLFPLYF), 112-132 (AGVLLGLYPPAAALAIAAWLL), and 154-174 (LLAWQEPHALLPMSVLTLLIV).

It belongs to the PlsY family. In terms of assembly, probably interacts with PlsX.

The protein resides in the cell inner membrane. It catalyses the reaction an acyl phosphate + sn-glycerol 3-phosphate = a 1-acyl-sn-glycero-3-phosphate + phosphate. It functions in the pathway lipid metabolism; phospholipid metabolism. Functionally, catalyzes the transfer of an acyl group from acyl-phosphate (acyl-PO(4)) to glycerol-3-phosphate (G3P) to form lysophosphatidic acid (LPA). This enzyme utilizes acyl-phosphate as fatty acyl donor, but not acyl-CoA or acyl-ACP. The chain is Glycerol-3-phosphate acyltransferase from Pseudomonas syringae pv. tomato (strain ATCC BAA-871 / DC3000).